The chain runs to 294 residues: 2-hydroxy-3-oxopropionate reductase (294 aa).

Residues 4 to 18 and S95 each bind NAD(+); that span reads GFIG…MSKN. Residue K170 is part of the active site. Position 238 (K238) interacts with NAD(+).

Belongs to the HIBADH-related family. 2-hydroxy-3-oxopropionate reductase subfamily.

It catalyses the reaction (R)-glycerate + NADP(+) = 2-hydroxy-3-oxopropanoate + NADPH + H(+). It carries out the reaction (R)-glycerate + NAD(+) = 2-hydroxy-3-oxopropanoate + NADH + H(+). Its pathway is carbohydrate acid metabolism; galactarate degradation; D-glycerate from galactarate: step 3/3. Functionally, catalyzes the reduction of tatronate semialdehyde to D-glycerate. The protein is 2-hydroxy-3-oxopropionate reductase of Escherichia coli O6:H1 (strain CFT073 / ATCC 700928 / UPEC).